The chain runs to 614 residues: Leucine aminopeptidase 2 (614 aa).

A peptide-binding positions include 139–141 and 271–276; these read QCQ and PYGGME. His-300 is a binding site for Zn(2+). The Proton acceptor role is filled by Glu-301. 2 residues coordinate Zn(2+): His-304 and Glu-323. Tyr-385 (proton donor) is an active-site residue.

This sequence belongs to the peptidase M1 family. It depends on Zn(2+) as a cofactor.

The protein localises to the cytoplasm. It localises to the nucleus. The catalysed reaction is an epoxide + H2O = an ethanediol. Its function is as follows. Aminopeptidase that preferentially cleaves di- and tripeptides. Also has low epoxide hydrolase activity (in vitro). Can hydrolyze the epoxide leukotriene LTA(4) but it forms preferentially 5,6-dihydroxy-7,9,11,14-eicosatetraenoic acid rather than the cytokine leukotriene B(4) as the product compared to the homologous mammalian enzyme (in vitro). This is Leucine aminopeptidase 2 from Aspergillus fumigatus (strain ATCC MYA-4609 / CBS 101355 / FGSC A1100 / Af293) (Neosartorya fumigata).